The following is a 355-amino-acid chain: Small ribosomal subunit biogenesis GTPase RsgA 1 (355 aa).

Positions 103–262 (GRVADRQAIA…LIDTPGVREF (160 aa)) constitute a CP-type G domain. GTP contacts are provided by residues 152–155 (NKAD) and 204–212 (GSSGVGKSS). Zn(2+)-binding residues include C285, C290, H292, and C298.

The protein belongs to the TRAFAC class YlqF/YawG GTPase family. RsgA subfamily. In terms of assembly, monomer. Associates with 30S ribosomal subunit, binds 16S rRNA. Zn(2+) serves as cofactor.

It is found in the cytoplasm. Its function is as follows. One of several proteins that assist in the late maturation steps of the functional core of the 30S ribosomal subunit. Helps release RbfA from mature subunits. May play a role in the assembly of ribosomal proteins into the subunit. Circularly permuted GTPase that catalyzes slow GTP hydrolysis, GTPase activity is stimulated by the 30S ribosomal subunit. The protein is Small ribosomal subunit biogenesis GTPase RsgA 1 of Bacteroides thetaiotaomicron (strain ATCC 29148 / DSM 2079 / JCM 5827 / CCUG 10774 / NCTC 10582 / VPI-5482 / E50).